Consider the following 317-residue polypeptide: Putative peptide import ATP-binding protein BruAb2_0797 (317 aa).

Residues 7-250 enclose the ABC transporter domain; that stretch reads LSVRGLAKHY…PQHPYTRALL (244 aa). 43-50 contributes to the ATP binding site; the sequence is GESGSGKT.

Belongs to the ABC transporter superfamily. In terms of assembly, the complex is composed of two ATP-binding proteins (BruAb2_0796 and BruAb2_0797), two transmembrane proteins (BruAb2_0794) and a solute-binding protein (BruAb2_0792).

The protein localises to the cell inner membrane. In terms of biological role, probably part of an ABC transporter complex that could be involved in peptide import. Probably responsible for energy coupling to the transport system. This chain is Putative peptide import ATP-binding protein BruAb2_0797, found in Brucella abortus biovar 1 (strain 9-941).